The chain runs to 339 residues: DNA-directed RNA polymerase subunit alpha (339 aa).

Positions 1-235 (MTIQKNWQEL…DQLNVFVNFE (235 aa)) are alpha N-terminal domain (alpha-NTD). Residues 251–339 (FNPAFLKKVD…ELAKRFEDHY (89 aa)) are alpha C-terminal domain (alpha-CTD).

The protein belongs to the RNA polymerase alpha chain family. As to quaternary structure, homodimer. The RNAP catalytic core consists of 2 alpha, 1 beta, 1 beta' and 1 omega subunit. When a sigma factor is associated with the core the holoenzyme is formed, which can initiate transcription.

The catalysed reaction is RNA(n) + a ribonucleoside 5'-triphosphate = RNA(n+1) + diphosphate. Its function is as follows. DNA-dependent RNA polymerase catalyzes the transcription of DNA into RNA using the four ribonucleoside triphosphates as substrates. In Nitrobacter winogradskyi (strain ATCC 25391 / DSM 10237 / CIP 104748 / NCIMB 11846 / Nb-255), this protein is DNA-directed RNA polymerase subunit alpha.